The following is a 436-amino-acid chain: GTPase Obg (436 aa).

The 159-residue stretch at 1–159 (MAFVDQATIE…LKVKLELRVL (159 aa)) folds into the Obg domain. The OBG-type G domain maps to 160 to 335 (ADVGLVGFPS…LLLKVADLLD (176 aa)). GTP contacts are provided by residues 166–173 (GFPSAGKS), 191–195 (FTTID), 213–216 (DLPG), 285–288 (TKMD), and 316–318 (SSV). Positions 173 and 193 each coordinate Mg(2+). An OCT domain is found at 357 to 436 (KDDHQSTDFQ…GADFAFEFEE (80 aa)).

This sequence belongs to the TRAFAC class OBG-HflX-like GTPase superfamily. OBG GTPase family. In terms of assembly, monomer. It depends on Mg(2+) as a cofactor.

Its subcellular location is the cytoplasm. An essential GTPase which binds GTP, GDP and possibly (p)ppGpp with moderate affinity, with high nucleotide exchange rates and a fairly low GTP hydrolysis rate. Plays a role in control of the cell cycle, stress response, ribosome biogenesis and in those bacteria that undergo differentiation, in morphogenesis control. The sequence is that of GTPase Obg from Oenococcus oeni (strain ATCC BAA-331 / PSU-1).